The following is a 216-amino-acid chain: Uracil phosphoribosyltransferase (216 aa).

Residue 30-34 coordinates GTP; that stretch reads KNLVK. Residues arginine 80, arginine 105, and 140 to 148 each bind 5-phospho-alpha-D-ribose 1-diphosphate; that span reads DPMIATGST. Residues isoleucine 203 and 208–210 each bind uracil; that span reads GDA. Aspartate 209 lines the 5-phospho-alpha-D-ribose 1-diphosphate pocket.

The protein belongs to the UPRTase family. Mg(2+) serves as cofactor.

It carries out the reaction UMP + diphosphate = 5-phospho-alpha-D-ribose 1-diphosphate + uracil. Its pathway is pyrimidine metabolism; UMP biosynthesis via salvage pathway; UMP from uracil: step 1/1. With respect to regulation, allosterically activated by GTP. Functionally, catalyzes the conversion of uracil and 5-phospho-alpha-D-ribose 1-diphosphate (PRPP) to UMP and diphosphate. This is Uracil phosphoribosyltransferase from Sulfolobus acidocaldarius (strain ATCC 33909 / DSM 639 / JCM 8929 / NBRC 15157 / NCIMB 11770).